Here is a 354-residue protein sequence, read N- to C-terminus: 5,10-methenyltetrahydromethanopterin hydrogenase (354 aa).

Belongs to the HMD family.

It carries out the reaction 5,10-methenyl-5,6,7,8-tetrahydromethanopterin + H2 = 5,10-methylenetetrahydromethanopterin + H(+). Its pathway is one-carbon metabolism; methanogenesis from CO(2); 5,10-methylene-5,6,7,8-tetrahydromethanopterin from 5,10-methenyl-5,6,7,8-tetrahydromethanopterin (hydrogen route): step 1/1. In terms of biological role, catalyzes the reversible reduction of methenyl-H(4)MPT(+) to methylene-H(4)MPT. In Methanococcus maripaludis (strain C5 / ATCC BAA-1333), this protein is 5,10-methenyltetrahydromethanopterin hydrogenase.